The chain runs to 92 residues: Small ribosomal subunit protein bS20 (92 aa).

The disordered stretch occupies residues 1–22 (MANSPQSKKRARQAEARAAVNK).

This sequence belongs to the bacterial ribosomal protein bS20 family.

Functionally, binds directly to 16S ribosomal RNA. This chain is Small ribosomal subunit protein bS20, found in Cereibacter sphaeroides (strain ATCC 17029 / ATH 2.4.9) (Rhodobacter sphaeroides).